We begin with the raw amino-acid sequence, 434 residues long: ATP-dependent protease ATPase subunit HslU (434 aa).

Residues Ile18, 60-65, Asp247, Glu312, and Arg384 each bind ATP; that span reads GVGKTE.

Belongs to the ClpX chaperone family. HslU subfamily. A double ring-shaped homohexamer of HslV is capped on each side by a ring-shaped HslU homohexamer. The assembly of the HslU/HslV complex is dependent on binding of ATP.

The protein resides in the cytoplasm. Functionally, ATPase subunit of a proteasome-like degradation complex; this subunit has chaperone activity. The binding of ATP and its subsequent hydrolysis by HslU are essential for unfolding of protein substrates subsequently hydrolyzed by HslV. HslU recognizes the N-terminal part of its protein substrates and unfolds these before they are guided to HslV for hydrolysis. This Brucella melitensis biotype 1 (strain ATCC 23456 / CCUG 17765 / NCTC 10094 / 16M) protein is ATP-dependent protease ATPase subunit HslU.